The following is a 237-amino-acid chain: Ribonuclease PH (237 aa).

Phosphate contacts are provided by residues R86 and 124–126 (GTR).

The protein belongs to the RNase PH family. In terms of assembly, homohexameric ring arranged as a trimer of dimers.

It carries out the reaction tRNA(n+1) + phosphate = tRNA(n) + a ribonucleoside 5'-diphosphate. Phosphorolytic 3'-5' exoribonuclease that plays an important role in tRNA 3'-end maturation. Removes nucleotide residues following the 3'-CCA terminus of tRNAs; can also add nucleotides to the ends of RNA molecules by using nucleoside diphosphates as substrates, but this may not be physiologically important. Probably plays a role in initiation of 16S rRNA degradation (leading to ribosome degradation) during starvation. This is Ribonuclease PH from Shewanella oneidensis (strain ATCC 700550 / JCM 31522 / CIP 106686 / LMG 19005 / NCIMB 14063 / MR-1).